A 196-amino-acid polypeptide reads, in one-letter code: ATP-dependent Clp protease proteolytic subunit (196 aa).

Catalysis depends on Ser-101, which acts as the Nucleophile. The active site involves His-126.

The protein belongs to the peptidase S14 family. As to quaternary structure, component of the chloroplastic Clp protease core complex.

It localises to the plastid. The protein resides in the chloroplast stroma. The catalysed reaction is Hydrolysis of proteins to small peptides in the presence of ATP and magnesium. alpha-casein is the usual test substrate. In the absence of ATP, only oligopeptides shorter than five residues are hydrolyzed (such as succinyl-Leu-Tyr-|-NHMec, and Leu-Tyr-Leu-|-Tyr-Trp, in which cleavage of the -Tyr-|-Leu- and -Tyr-|-Trp bonds also occurs).. Its function is as follows. Cleaves peptides in various proteins in a process that requires ATP hydrolysis. Has a chymotrypsin-like activity. Plays a major role in the degradation of misfolded proteins. The protein is ATP-dependent Clp protease proteolytic subunit of Populus trichocarpa (Western balsam poplar).